The sequence spans 251 residues: Putative imidazole glycerol phosphate synthase subunit hisF2 (251 aa).

The active site involves aspartate 130.

The protein belongs to the HisA/HisF family. Heterodimer of HisH and HisF.

The protein resides in the cytoplasm. The catalysed reaction is 5-[(5-phospho-1-deoxy-D-ribulos-1-ylimino)methylamino]-1-(5-phospho-beta-D-ribosyl)imidazole-4-carboxamide + L-glutamine = D-erythro-1-(imidazol-4-yl)glycerol 3-phosphate + 5-amino-1-(5-phospho-beta-D-ribosyl)imidazole-4-carboxamide + L-glutamate + H(+). The protein operates within amino-acid biosynthesis; L-histidine biosynthesis; L-histidine from 5-phospho-alpha-D-ribose 1-diphosphate: step 5/9. In terms of biological role, IGPS catalyzes the conversion of PRFAR and glutamine to IGP, AICAR and glutamate. The HisF subunit catalyzes the cyclization activity that produces IGP and AICAR from PRFAR using the ammonia provided by the HisH subunit. The polypeptide is Putative imidazole glycerol phosphate synthase subunit hisF2 (hisF2) (Pseudomonas aeruginosa (strain ATCC 15692 / DSM 22644 / CIP 104116 / JCM 14847 / LMG 12228 / 1C / PRS 101 / PAO1)).